The following is a 203-amino-acid chain: Holliday junction branch migration complex subunit RuvA (203 aa).

The interval 1–64 (MIGRLRGYIL…EDAQLLYGFN (64 aa)) is domain I. Residues 65–142 (DKQERALFRE…KGLNGDLFNN (78 aa)) form a domain II region. The flexible linker stretch occupies residues 143 to 154 (SSEITLPTAAQA). The domain III stretch occupies residues 155 to 203 (AELDAEAEAASALVALGYKPQEASRMVSKIAKPGADCETLIRDALRAAL).

The protein belongs to the RuvA family. Homotetramer. Forms an RuvA(8)-RuvB(12)-Holliday junction (HJ) complex. HJ DNA is sandwiched between 2 RuvA tetramers; dsDNA enters through RuvA and exits via RuvB. An RuvB hexamer assembles on each DNA strand where it exits the tetramer. Each RuvB hexamer is contacted by two RuvA subunits (via domain III) on 2 adjacent RuvB subunits; this complex drives branch migration. In the full resolvosome a probable DNA-RuvA(4)-RuvB(12)-RuvC(2) complex forms which resolves the HJ.

It is found in the cytoplasm. In terms of biological role, the RuvA-RuvB-RuvC complex processes Holliday junction (HJ) DNA during genetic recombination and DNA repair, while the RuvA-RuvB complex plays an important role in the rescue of blocked DNA replication forks via replication fork reversal (RFR). RuvA specifically binds to HJ cruciform DNA, conferring on it an open structure. The RuvB hexamer acts as an ATP-dependent pump, pulling dsDNA into and through the RuvAB complex. HJ branch migration allows RuvC to scan DNA until it finds its consensus sequence, where it cleaves and resolves the cruciform DNA. This Serratia proteamaculans (strain 568) protein is Holliday junction branch migration complex subunit RuvA.